A 344-amino-acid polypeptide reads, in one-letter code: N-acetyl-gamma-glutamyl-phosphate reductase (344 aa).

Cys-149 is an active-site residue.

This sequence belongs to the NAGSA dehydrogenase family. Type 1 subfamily.

It is found in the cytoplasm. It catalyses the reaction N-acetyl-L-glutamate 5-semialdehyde + phosphate + NADP(+) = N-acetyl-L-glutamyl 5-phosphate + NADPH + H(+). It functions in the pathway amino-acid biosynthesis; L-arginine biosynthesis; N(2)-acetyl-L-ornithine from L-glutamate: step 3/4. Its function is as follows. Catalyzes the NADPH-dependent reduction of N-acetyl-5-glutamyl phosphate to yield N-acetyl-L-glutamate 5-semialdehyde. The protein is N-acetyl-gamma-glutamyl-phosphate reductase of Halorhodospira halophila (strain DSM 244 / SL1) (Ectothiorhodospira halophila (strain DSM 244 / SL1)).